Reading from the N-terminus, the 461-residue chain is Cysteine--tRNA ligase (461 aa).

Residue Cys27 participates in Zn(2+) binding. The short motif at 29–39 is the 'HIGH' region element; the sequence is ITVYDYCHIGH. Cys208, His233, and Glu237 together coordinate Zn(2+). A 'KMSKS' region motif is present at residues 265–269; that stretch reads KMSKS. Residue Lys268 participates in ATP binding.

The protein belongs to the class-I aminoacyl-tRNA synthetase family. Monomer. The cofactor is Zn(2+).

Its subcellular location is the cytoplasm. The enzyme catalyses tRNA(Cys) + L-cysteine + ATP = L-cysteinyl-tRNA(Cys) + AMP + diphosphate. This chain is Cysteine--tRNA ligase, found in Chromohalobacter salexigens (strain ATCC BAA-138 / DSM 3043 / CIP 106854 / NCIMB 13768 / 1H11).